We begin with the raw amino-acid sequence, 310 residues long: Malate dehydrogenase (310 aa).

NAD(+) contacts are provided by residues 7 to 12 (GAGNVG) and Asp-32. Substrate-binding residues include Arg-81 and Arg-87. NAD(+)-binding positions include Asn-94 and 117–119 (VSN). Substrate-binding residues include Asn-119 and Arg-150. The active-site Proton acceptor is His-174.

It belongs to the LDH/MDH superfamily. MDH type 3 family. Homotetramer; arranged as a dimer of dimers.

The enzyme catalyses (S)-malate + NAD(+) = oxaloacetate + NADH + H(+). Catalyzes the reversible oxidation of malate to oxaloacetate. The polypeptide is Malate dehydrogenase (Prosthecochloris vibrioformis (Chlorobium vibrioforme)).